A 528-amino-acid polypeptide reads, in one-letter code: Light-independent protochlorophyllide reductase subunit B (528 aa).

Position 36 (aspartate 36) interacts with [4Fe-4S] cluster. The active-site Proton donor is aspartate 274. Position 409 to 410 (409 to 410 (GL)) interacts with substrate. Positions 429-471 (GPSHHGGHAPKPMHDAPAASAAAGAEASMAEETAAPSQDAPAA) are disordered. Low complexity predominate over residues 444–465 (APAASAAAGAEASMAEETAAPS).

Belongs to the ChlB/BchB/BchZ family. Protochlorophyllide reductase is composed of three subunits; BchL, BchN and BchB. Forms a heterotetramer of two BchB and two BchN subunits. The cofactor is [4Fe-4S] cluster.

It catalyses the reaction chlorophyllide a + oxidized 2[4Fe-4S]-[ferredoxin] + 2 ADP + 2 phosphate = protochlorophyllide a + reduced 2[4Fe-4S]-[ferredoxin] + 2 ATP + 2 H2O. Its pathway is porphyrin-containing compound metabolism; bacteriochlorophyll biosynthesis (light-independent). In terms of biological role, component of the dark-operative protochlorophyllide reductase (DPOR) that uses Mg-ATP and reduced ferredoxin to reduce ring D of protochlorophyllide (Pchlide) to form chlorophyllide a (Chlide). This reaction is light-independent. The NB-protein (BchN-BchB) is the catalytic component of the complex. The chain is Light-independent protochlorophyllide reductase subunit B from Dinoroseobacter shibae (strain DSM 16493 / NCIMB 14021 / DFL 12).